A 428-amino-acid chain; its full sequence is Glutamate-1-semialdehyde 2,1-aminomutase (428 aa).

Lys-266 is subject to N6-(pyridoxal phosphate)lysine.

This sequence belongs to the class-III pyridoxal-phosphate-dependent aminotransferase family. HemL subfamily. Homodimer. It depends on pyridoxal 5'-phosphate as a cofactor.

Its subcellular location is the cytoplasm. The catalysed reaction is (S)-4-amino-5-oxopentanoate = 5-aminolevulinate. Its pathway is porphyrin-containing compound metabolism; protoporphyrin-IX biosynthesis; 5-aminolevulinate from L-glutamyl-tRNA(Glu): step 2/2. This Herminiimonas arsenicoxydans protein is Glutamate-1-semialdehyde 2,1-aminomutase.